The chain runs to 171 residues: Protein BTG1 (171 aa).

Ser-159 is subject to Phosphoserine.

This sequence belongs to the BTG family. In terms of assembly, interacts with CNOT7 and CNOT8.

Its function is as follows. Anti-proliferative protein. The chain is Protein BTG1 (BTG1) from Homo sapiens (Human).